The following is a 236-amino-acid chain: Calcium-binding lectin RapA2 (236 aa).

It is found in the secreted. Interacts specifically in a calcium-dependent manner with the acidic exopolysaccharide (EPS) and capsular polysaccharide produced by R.leguminosarum. Could be involved in the development of the biofilm matrix made of EPS. In Rhizobium johnstonii (strain DSM 114642 / LMG 32736 / 3841) (Rhizobium leguminosarum bv. viciae), this protein is Calcium-binding lectin RapA2.